We begin with the raw amino-acid sequence, 480 residues long: Adenosylhomocysteinase (480 aa).

Substrate contacts are provided by threonine 63, aspartate 142, and glutamate 203. An NAD(+)-binding site is contributed by 204–206; it reads TTT. 2 residues coordinate substrate: lysine 233 and aspartate 237. NAD(+) is bound by residues asparagine 238, 267–272, glutamate 290, asparagine 325, 346–348, and asparagine 394; these read GYGDVG and IGH.

This sequence belongs to the adenosylhomocysteinase family. NAD(+) serves as cofactor.

It is found in the cytoplasm. It carries out the reaction S-adenosyl-L-homocysteine + H2O = L-homocysteine + adenosine. It participates in amino-acid biosynthesis; L-homocysteine biosynthesis; L-homocysteine from S-adenosyl-L-homocysteine: step 1/1. In terms of biological role, may play a key role in the regulation of the intracellular concentration of adenosylhomocysteine. In Xanthomonas axonopodis pv. citri (strain 306), this protein is Adenosylhomocysteinase.